The following is a 215-amino-acid chain: Ribose-5-phosphate isomerase A (215 aa).

Substrate contacts are provided by residues 26-29 (TGST), 79-82 (DGAD), and 92-95 (KGGG). Catalysis depends on Glu-101, which acts as the Proton acceptor. Lys-119 contacts substrate.

This sequence belongs to the ribose 5-phosphate isomerase family. Homodimer.

It catalyses the reaction aldehydo-D-ribose 5-phosphate = D-ribulose 5-phosphate. Its pathway is carbohydrate degradation; pentose phosphate pathway; D-ribose 5-phosphate from D-ribulose 5-phosphate (non-oxidative stage): step 1/1. Its function is as follows. Catalyzes the reversible conversion of ribose-5-phosphate to ribulose 5-phosphate. The chain is Ribose-5-phosphate isomerase A from Xylella fastidiosa (strain M12).